Here is a 177-residue protein sequence, read N- to C-terminus: Large ribosomal subunit protein uL6 (177 aa).

The protein belongs to the universal ribosomal protein uL6 family. Part of the 50S ribosomal subunit.

Its function is as follows. This protein binds to the 23S rRNA, and is important in its secondary structure. It is located near the subunit interface in the base of the L7/L12 stalk, and near the tRNA binding site of the peptidyltransferase center. This is Large ribosomal subunit protein uL6 from Sinorhizobium medicae (strain WSM419) (Ensifer medicae).